The primary structure comprises 218 residues: Ribonuclease HII (218 aa).

The 190-residue stretch at 13 to 202 (DLVAGVDEVG…VRAAHEARAT (190 aa)) folds into the RNase H type-2 domain. Positions 19, 20, and 111 each coordinate a divalent metal cation.

Belongs to the RNase HII family. Mn(2+) serves as cofactor. The cofactor is Mg(2+).

It is found in the cytoplasm. It carries out the reaction Endonucleolytic cleavage to 5'-phosphomonoester.. Functionally, endonuclease that specifically degrades the RNA of RNA-DNA hybrids. The polypeptide is Ribonuclease HII (Pseudomonas syringae pv. syringae (strain B728a)).